The primary structure comprises 30 residues: Chassatide C9 (30 aa).

The segment at residues 1–30 is a cross-link (cyclopeptide (Gly-Asn)); it reads GIPCGESCVFIPCVTTVIGCSCKDKVCYNN. 3 cysteine pairs are disulfide-bonded: Cys4/Cys20, Cys8/Cys22, and Cys13/Cys27.

This is a cyclic peptide.

In terms of biological role, probably participates in a plant defense mechanism. This Chassalia chartacea (Chassalia curviflora) protein is Chassatide C9.